The chain runs to 300 residues: N-acetylmuramic acid 6-phosphate etherase 1 (300 aa).

The SIS domain occupies 57 to 220 (IATAFAQGGR…TTGAMIKSGK (164 aa)). Catalysis depends on Glu85, which acts as the Proton donor. The active site involves Glu116.

The protein belongs to the GCKR-like family. MurNAc-6-P etherase subfamily. Homodimer.

It carries out the reaction N-acetyl-D-muramate 6-phosphate + H2O = N-acetyl-D-glucosamine 6-phosphate + (R)-lactate. It participates in amino-sugar metabolism; 1,6-anhydro-N-acetylmuramate degradation. Its pathway is amino-sugar metabolism; N-acetylmuramate degradation. It functions in the pathway cell wall biogenesis; peptidoglycan recycling. In terms of biological role, specifically catalyzes the cleavage of the D-lactyl ether substituent of MurNAc 6-phosphate, producing GlcNAc 6-phosphate and D-lactate. Together with AnmK, is also required for the utilization of anhydro-N-acetylmuramic acid (anhMurNAc) either imported from the medium or derived from its own cell wall murein, and thus plays a role in cell wall recycling. The protein is N-acetylmuramic acid 6-phosphate etherase 1 of Vibrio cholerae serotype O1 (strain ATCC 39315 / El Tor Inaba N16961).